We begin with the raw amino-acid sequence, 494 residues long: tRNA-2-methylthio-N(6)-dimethylallyladenosine synthase (494 aa).

Residues 5–121 (RTYQVRTYGC…LPALLERARV (117 aa)) form the MTTase N-terminal domain. 6 residues coordinate [4Fe-4S] cluster: Cys14, Cys50, Cys84, Cys158, Cys162, and Cys165. One can recognise a Radical SAM core domain in the interval 144–374 (RESVYAAWVA…LELQERISEE (231 aa)). Residues 377–446 (AKFVGREVEV…PHHLVADSGI (70 aa)) enclose the TRAM domain. Residues 458 to 468 (WEARNAPERRP) show a composition bias toward basic and acidic residues. The interval 458–494 (WEARNAPERRPTGVLLGMPKVGAPEPQPSVVGGCCDS) is disordered.

Belongs to the methylthiotransferase family. MiaB subfamily. As to quaternary structure, monomer. Requires [4Fe-4S] cluster as cofactor.

Its subcellular location is the cytoplasm. It carries out the reaction N(6)-dimethylallyladenosine(37) in tRNA + (sulfur carrier)-SH + AH2 + 2 S-adenosyl-L-methionine = 2-methylsulfanyl-N(6)-dimethylallyladenosine(37) in tRNA + (sulfur carrier)-H + 5'-deoxyadenosine + L-methionine + A + S-adenosyl-L-homocysteine + 2 H(+). Its function is as follows. Catalyzes the methylthiolation of N6-(dimethylallyl)adenosine (i(6)A), leading to the formation of 2-methylthio-N6-(dimethylallyl)adenosine (ms(2)i(6)A) at position 37 in tRNAs that read codons beginning with uridine. The sequence is that of tRNA-2-methylthio-N(6)-dimethylallyladenosine synthase from Thermobifida fusca (strain YX).